Consider the following 512-residue polypeptide: Cytochrome P450 monooxygenase cheE (512 aa).

Residues Y5 to A27 form a helical membrane-spanning segment. N-linked (GlcNAc...) asparagine glycosylation is found at N53, N124, and N168. A heme-binding site is contributed by C455. Residues N499 and N508 are each glycosylated (N-linked (GlcNAc...) asparagine).

It belongs to the cytochrome P450 family. The cofactor is heme.

The protein resides in the membrane. It participates in secondary metabolite biosynthesis. Functionally, cytochrome P450 monooxygenase; part of the gene cluster that mediates the biosynthesis of chaetoglobosin A which has a unique inhibitory activity against actin polymerization in mammalian cells. Chaetoglobosin A and its intermediates are involved in the morphological differentiation of C.globosum. The first step of the pathway is the synthesis of prochaetoglobosin I via condensation of one acetyl-CoA, 8 malonyl-CoA, and a L-tryptophan molecule by the PKS-NRPS hybrid synthetase cheA, followed by reduction of backbone double bond to install desired geometry by the enoyl reductase cheB. Further multiple oxidation steps performed by the cytochrome P450 monooxygenases cheE and cheG, as well as by the FAD-linked oxidoreductase cheF, lead to the formation of chaetoglobosin A. Depending on the order of action of these reductases, distinct intermediates can be identified. Within the pathway, the cytochrome P450 monooxygenase cheE catalyzes a stereospecific epoxidation on prochaetoglobosin I, cytoglobosin D, and chaetoglobosin J intermediates. The FAD-linked oxidoreductase cheF performs dehydrogenation of the C-20 hydroxyl groups in the 20-dihyrochaetoglobosin A and cytoglobosin D intermediates. Finally, the cytochrome P450 monooxygenase cheG can catalyze the stereospecific dihydroxylation of prochaetoglobosin I and prochaetoglobosin IV at C-19 and C-20, respectively. The Diels-Alderase cheD may play a role in the post-PKS-NRPS biosynthetic steps catalyzing Diels-Alder cyclization. The protein is Cytochrome P450 monooxygenase cheE of Chaetomium globosum (strain ATCC 6205 / CBS 148.51 / DSM 1962 / NBRC 6347 / NRRL 1970) (Soil fungus).